The primary structure comprises 102 residues: Integration host factor subunit alpha (102 aa).

The tract at residues 49 to 71 (FGNFQLRTKPQRPGRNPKTGEEI) is disordered.

It belongs to the bacterial histone-like protein family. As to quaternary structure, heterodimer of an alpha and a beta chain.

In terms of biological role, this protein is one of the two subunits of integration host factor, a specific DNA-binding protein that functions in genetic recombination as well as in transcriptional and translational control. In Nitrosomonas eutropha (strain DSM 101675 / C91 / Nm57), this protein is Integration host factor subunit alpha.